The chain runs to 122 residues: Short coiled-coil protein (122 aa).

The tract at residues 1–26 (MDGLNTGEEEDSAFTSISLTDDTDHS) is disordered. Positions 43–101 (NADMDAVDAENQVELEEKTRLINQVLELQHTLEDLSARVDAVKEENLKLKSENQVLGQY) form a coiled coil.

This sequence belongs to the SCOC family. As to quaternary structure, homodimer. Interacts with ARL1, ARL2 and ARL3. Directly interacts with FEZ1 and UVRAG. The interaction with UVRAG is reduced by amino acid starvation, but the complex is stabilized in the presence of FEZ1. Interacts with NRBF2.

The protein resides in the golgi apparatus membrane. The protein localises to the golgi apparatus. It is found in the trans-Golgi network. It localises to the cytoplasm. Its subcellular location is the cytosol. Positive regulator of amino acid starvation-induced autophagy. This is Short coiled-coil protein (Scoc) from Rattus norvegicus (Rat).